We begin with the raw amino-acid sequence, 166 residues long: Endoribonuclease YbeY (166 aa).

Zn(2+) is bound by residues His-111, His-115, and His-121. Residues 140–166 form a disordered region; that stretch reads ELGYPDPYADDESADPPHSDTPSKDHE. The span at 154–166 shows a compositional bias: basic and acidic residues; sequence DPPHSDTPSKDHE.

The protein belongs to the endoribonuclease YbeY family. It depends on Zn(2+) as a cofactor.

Its subcellular location is the cytoplasm. In terms of biological role, single strand-specific metallo-endoribonuclease involved in late-stage 70S ribosome quality control and in maturation of the 3' terminus of the 16S rRNA. The polypeptide is Endoribonuclease YbeY (Pseudomonas syringae pv. syringae (strain B728a)).